Consider the following 530-residue polypeptide: Type 2 DNA topoisomerase 6 subunit B (530 aa).

Residues N42, D76, 97 to 98 (SK), 106 to 113 (GMYGLGVK), and K427 contribute to the ATP site.

It belongs to the TOP6B family. In terms of assembly, homodimer. Heterotetramer of two Top6A and two Top6B chains.

The enzyme catalyses ATP-dependent breakage, passage and rejoining of double-stranded DNA.. In terms of biological role, relaxes both positive and negative superturns and exhibits a strong decatenase activity. The sequence is that of Type 2 DNA topoisomerase 6 subunit B from Saccharolobus islandicus (strain Y.N.15.51 / Yellowstone #2) (Sulfolobus islandicus).